A 273-amino-acid polypeptide reads, in one-letter code: 4-hydroxy-tetrahydrodipicolinate reductase (273 aa).

Residues 12–17 (GAGGRM) and E38 each bind NAD(+). R39 lines the NADP(+) pocket. Residues 102 to 104 (GTT) and 126 to 129 (AANF) contribute to the NAD(+) site. The active-site Proton donor/acceptor is the H159. Position 160 (H160) interacts with (S)-2,3,4,5-tetrahydrodipicolinate. Residue K163 is the Proton donor of the active site. 169 to 170 (GT) lines the (S)-2,3,4,5-tetrahydrodipicolinate pocket.

Belongs to the DapB family. Homotetramer.

It is found in the cytoplasm. The catalysed reaction is (S)-2,3,4,5-tetrahydrodipicolinate + NAD(+) + H2O = (2S,4S)-4-hydroxy-2,3,4,5-tetrahydrodipicolinate + NADH + H(+). It carries out the reaction (S)-2,3,4,5-tetrahydrodipicolinate + NADP(+) + H2O = (2S,4S)-4-hydroxy-2,3,4,5-tetrahydrodipicolinate + NADPH + H(+). It participates in amino-acid biosynthesis; L-lysine biosynthesis via DAP pathway; (S)-tetrahydrodipicolinate from L-aspartate: step 4/4. In terms of biological role, catalyzes the conversion of 4-hydroxy-tetrahydrodipicolinate (HTPA) to tetrahydrodipicolinate. The chain is 4-hydroxy-tetrahydrodipicolinate reductase from Pectobacterium atrosepticum (strain SCRI 1043 / ATCC BAA-672) (Erwinia carotovora subsp. atroseptica).